A 73-amino-acid polypeptide reads, in one-letter code: DNA gyrase inhibitor YacG (73 aa).

Residues C14, C17, C30, and C34 each contribute to the Zn(2+) site. The segment at 54-73 is disordered; the sequence is AEQADDTAGPGAAEDDTDSH.

Belongs to the DNA gyrase inhibitor YacG family. As to quaternary structure, interacts with GyrB. Zn(2+) serves as cofactor.

Its function is as follows. Inhibits all the catalytic activities of DNA gyrase by preventing its interaction with DNA. Acts by binding directly to the C-terminal domain of GyrB, which probably disrupts DNA binding by the gyrase. In Hyphomonas neptunium (strain ATCC 15444), this protein is DNA gyrase inhibitor YacG.